The primary structure comprises 165 residues: Protein SprT (165 aa).

Positions 19-163 (REKLAQANLK…RCVKCGEPLV (145 aa)) constitute a SprT-like domain. Position 78 (His78) interacts with Zn(2+). Residue Glu79 is part of the active site. His82 contacts Zn(2+).

The protein belongs to the SprT family. Zn(2+) serves as cofactor.

Its subcellular location is the cytoplasm. The sequence is that of Protein SprT from Enterobacter sp. (strain 638).